The following is a 312-amino-acid chain: Malate dehydrogenase (312 aa).

NAD(+)-binding positions include 7-13 and Asp-34; that span reads GAAGGIG. Positions 81 and 87 each coordinate substrate. NAD(+)-binding positions include Asn-94 and 117-119; that span reads ITN. Substrate-binding residues include Asn-119 and Arg-153. His-177 functions as the Proton acceptor in the catalytic mechanism. Met-227 lines the NAD(+) pocket.

It belongs to the LDH/MDH superfamily. MDH type 1 family. As to quaternary structure, homodimer.

The catalysed reaction is (S)-malate + NAD(+) = oxaloacetate + NADH + H(+). Its function is as follows. Catalyzes the reversible oxidation of malate to oxaloacetate. This chain is Malate dehydrogenase, found in Escherichia fergusonii (strain ATCC 35469 / DSM 13698 / CCUG 18766 / IAM 14443 / JCM 21226 / LMG 7866 / NBRC 102419 / NCTC 12128 / CDC 0568-73).